The primary structure comprises 155 residues: MSRQSETKKRTAKSDPIYRNRSVSMFINHILKDGEKSLAHKILYRAMKQIKRKTKKNPLSVLRQAVYRVTPNVAVKSRRVGGSNYQVPVEVKPARGKALAIRWIVGASRNRSGRSMASKSSYELIDAARNTGSAIRKKEETHKMAEANKAFAHLR.

Belongs to the universal ribosomal protein uS7 family. Part of the 30S ribosomal subunit.

Its subcellular location is the plastid. The protein localises to the chloroplast. Functionally, one of the primary rRNA binding proteins, it binds directly to 16S rRNA where it nucleates assembly of the head domain of the 30S subunit. The chain is Small ribosomal subunit protein uS7cz/uS7cy (rps7-A) from Psilotum nudum (Whisk fern).